The chain runs to 393 residues: Ribonucleoside-diphosphate reductase subunit M2 (393 aa).

The residue at position 18 (S18) is a Phosphoserine. The Fe cation site is built by D142, E173, and H176. Y180 is an active-site residue. Fe cation-binding residues include E236, E270, and H273.

The protein belongs to the ribonucleoside diphosphate reductase small chain family. Heterodimer of a large and a small subunit. The cofactor is Fe cation.

Its subcellular location is the cytoplasm. It carries out the reaction a 2'-deoxyribonucleoside 5'-diphosphate + [thioredoxin]-disulfide + H2O = a ribonucleoside 5'-diphosphate + [thioredoxin]-dithiol. Functionally, provides the precursors necessary for DNA synthesis. Catalyzes the biosynthesis of deoxyribonucleotides from the corresponding ribonucleotides. This is Ribonucleoside-diphosphate reductase subunit M2 (RnrS) from Drosophila melanogaster (Fruit fly).